Here is a 372-residue protein sequence, read N- to C-terminus: MAASVPWACCAVLAAAAAAVYTQKHSPQEAPHVQYERLGADVTLPCGTASWDAAVTWRVNGTDLAPDLLNGSQLILRSLELGHSGLYACFHRDSWHLRHQVLLHVGLPPREPVLSCRSNTYPKGFYCSWHLPTPTYIPNTFNVTVLHGSKIMVCEKDPALKNRCHIRYMHLFSTIKYKVSISVSNALGHNTTAITFDEFTIVKPDPPENVVARPVPSNPRRLEVTWQTPSTWPDPESFPLKFFLRYRPLILDQWQHVELSDGTAHTITDAYAGKEYIIQVAAKDNEIGTWSDWSVAAHATPWTEEPRHLTTEAQAPETTTSTTSSLAPPPTTKICDPGELGSGGGPSILFLTSVPVTLVLAAAAATANNLLI.

The first 22 residues, 1 to 22 (MAASVPWACCAVLAAAAAAVYT), serve as a signal peptide directing secretion. The 78-residue stretch at 27–104 (PQEAPHVQYE…WHLRHQVLLH (78 aa)) folds into the Ig-like C2-type domain. A disulfide bridge links cysteine 46 with cysteine 89. N-linked (GlcNAc...) asparagine glycans are attached at residues asparagine 60, asparagine 70, asparagine 142, and asparagine 190. 2 Fibronectin type-III domains span residues 108–205 (PPRE…VKPD) and 206–306 (PPEN…TEEP). The short motif at 290–294 (WSDWS) is the WSXWS motif element. Positions 301-338 (PWTEEPRHLTTEAQAPETTTSTTSSLAPPPTTKICDPG) are disordered. Low complexity predominate over residues 311-326 (TEAQAPETTTSTTSSL). Serine 342 is lipidated: GPI-anchor amidated serine. A propeptide spans 343-372 (GGGPSILFLTSVPVTLVLAAAAATANNLLI) (removed in mature form).

This sequence belongs to the type I cytokine receptor family. Type 3 subfamily. In terms of assembly, forms a heterotrimer with LIFR and IL6ST. Interacts with heterodimeric neurotropic cytokine composed of CLCF1/CLC and CRLF1/CLF-1. Either alone or in complex with the heterodimer CLCF1-CRLF1 interacts with SORL1; this interaction may promote internalization and lysosomal degradation.

The protein localises to the cell membrane. Its function is as follows. Binds to CNTF. The alpha subunit provides the receptor specificity. The sequence is that of Ciliary neurotrophic factor receptor subunit alpha (Cntfr) from Mus musculus (Mouse).